The chain runs to 743 residues: Phosphoribosylformylglycinamidine synthase subunit PurL (743 aa).

The active site involves H50. The ATP site is built by Y53 and K92. E94 is a binding site for Mg(2+). Substrate is bound by residues 95 to 98 and R117; that span reads SHNH. Residue H96 is the Proton acceptor of the active site. Residue D118 participates in Mg(2+) binding. Q241 lines the substrate pocket. D269 serves as a coordination point for Mg(2+). 313 to 315 provides a ligand contact to substrate; it reads ESQ. ATP-binding residues include D495 and G532. Residue N533 participates in Mg(2+) binding. S535 contributes to the substrate binding site.

This sequence belongs to the FGAMS family. In terms of assembly, monomer. Part of the FGAM synthase complex composed of 1 PurL, 1 PurQ and 2 PurS subunits.

It localises to the cytoplasm. The catalysed reaction is N(2)-formyl-N(1)-(5-phospho-beta-D-ribosyl)glycinamide + L-glutamine + ATP + H2O = 2-formamido-N(1)-(5-O-phospho-beta-D-ribosyl)acetamidine + L-glutamate + ADP + phosphate + H(+). It functions in the pathway purine metabolism; IMP biosynthesis via de novo pathway; 5-amino-1-(5-phospho-D-ribosyl)imidazole from N(2)-formyl-N(1)-(5-phospho-D-ribosyl)glycinamide: step 1/2. In terms of biological role, part of the phosphoribosylformylglycinamidine synthase complex involved in the purines biosynthetic pathway. Catalyzes the ATP-dependent conversion of formylglycinamide ribonucleotide (FGAR) and glutamine to yield formylglycinamidine ribonucleotide (FGAM) and glutamate. The FGAM synthase complex is composed of three subunits. PurQ produces an ammonia molecule by converting glutamine to glutamate. PurL transfers the ammonia molecule to FGAR to form FGAM in an ATP-dependent manner. PurS interacts with PurQ and PurL and is thought to assist in the transfer of the ammonia molecule from PurQ to PurL. This chain is Phosphoribosylformylglycinamidine synthase subunit PurL, found in Rhizobium etli (strain ATCC 51251 / DSM 11541 / JCM 21823 / NBRC 15573 / CFN 42).